Consider the following 134-residue polypeptide: Estradiol 17-beta-dehydrogenase 8 (134 aa).

Ser38 contributes to the substrate binding site. At Lys42 the chain carries N6-succinyllysine. The active-site Proton acceptor is the Tyr51. Residues 51–55 (YAASK) and 84–86 (IAT) each bind NAD(+). The residue at position 55 (Lys55) is an N6-succinyllysine.

This sequence belongs to the short-chain dehydrogenases/reductases (SDR) family. Heterotetramer with CBR4; contains two molecules of HSD17B8 and CBR4.

Its subcellular location is the mitochondrion matrix. The catalysed reaction is 17beta-estradiol + NAD(+) = estrone + NADH + H(+). It carries out the reaction 17beta-estradiol + NADP(+) = estrone + NADPH + H(+). It catalyses the reaction testosterone + NAD(+) = androst-4-ene-3,17-dione + NADH + H(+). It functions in the pathway steroid biosynthesis; estrogen biosynthesis. The protein operates within lipid metabolism; fatty acid biosynthesis. NAD-dependent 17-beta-hydroxysteroid dehydrogenase with highest activity towards estradiol. Has very low activity towards testosterone. The heterotetramer with CBR4 has NADH-dependent 3-ketoacyl-acyl carrier protein reductase activity, and thereby plays a role in mitochondrial fatty acid biosynthesis. Within the heterotetramer, HSD17B8 binds NADH; CBR4 binds NADPD. In Callithrix jacchus (White-tufted-ear marmoset), this protein is Estradiol 17-beta-dehydrogenase 8 (HSD17B8).